The primary structure comprises 272 residues: HMP-PP phosphatase (272 aa).

D8 functions as the Nucleophile in the catalytic mechanism. Positions 8, 10, and 212 each coordinate Mg(2+).

This sequence belongs to the HAD-like hydrolase superfamily. Cof family. It depends on Mg(2+) as a cofactor.

The catalysed reaction is 4-amino-2-methyl-5-(diphosphooxymethyl)pyrimidine + H2O = 4-amino-2-methyl-5-(phosphooxymethyl)pyrimidine + phosphate + H(+). Functionally, catalyzes the hydrolysis of 4-amino-2-methyl-5-hydroxymethylpyrimidine pyrophosphate (HMP-PP) to 4-amino-2-methyl-5-hydroxymethylpyrimidine phosphate (HMP-P). This Klebsiella pneumoniae (strain 342) protein is HMP-PP phosphatase.